The following is a 931-amino-acid chain: G patch domain-containing protein 1 (931 aa).

3 disordered regions span residues 1-41 (MAAR…TVRD), 73-92 (PSTF…LGPE), and 169-209 (QGVG…EDDD). Ala-2 carries the post-translational modification N-acetylalanine. Phosphoserine occurs at positions 6 and 8. A G-patch domain is found at 152 to 198 (KLSVGFELLRKMGWKEGQGVGPRVKRRPRRQKPDPGVKIYGCALPPG). Lys-312 participates in a covalent cross-link: Glycyl lysine isopeptide (Lys-Gly) (interchain with G-Cter in SUMO2). 2 positions are modified to phosphoserine: Ser-357 and Ser-477. 2 disordered regions span residues 568–595 (RFTH…GDKQ) and 659–931 (LPTT…LRRQ). Residues 582–593 (EVPRDQENDVGD) show a composition bias toward basic and acidic residues. Residues 659-668 (LPTTQASSEK) are compositionally biased toward polar residues. Residues 669–695 (VSQHRGPDKSRKPSRWDTSKHEKKEDS) show a composition bias toward basic and acidic residues. Position 715 is a phosphoserine (Ser-715). Over residues 769 to 780 (SEDEQGDSEDDQ) the composition is skewed to acidic residues. A compositionally biased stretch (polar residues) spans 786–802 (ANFQSSQDTDLGETSSV). Residues 852-888 (EKHKKNKDKHKAKKEHRRKKEKKKKHRKHKHKGKQKN) are compositionally biased toward basic residues. A compositionally biased stretch (low complexity) spans 896–905 (SSESSDSSDS). Basic residues predominate over residues 922–931 (RLKSLPLRRQ).

This sequence belongs to the GPATCH1 family.

The polypeptide is G patch domain-containing protein 1 (GPATCH1) (Homo sapiens (Human)).